Reading from the N-terminus, the 222-residue chain is Pyridoxine/pyridoxamine 5'-phosphate oxidase (222 aa).

Substrate contacts are provided by residues 16–19 (RVSY) and lysine 75. Residues 70–75 (RTVLCK), 85–86 (FT), lysine 92, and glutamine 114 each bind FMN. 3 residues coordinate substrate: tyrosine 132, arginine 136, and serine 140. FMN contacts are provided by residues 149 to 150 (QS) and tryptophan 195. 201–203 (RLH) serves as a coordination point for substrate. FMN is bound at residue arginine 205.

The protein belongs to the pyridoxamine 5'-phosphate oxidase family. Homodimer. FMN is required as a cofactor.

The catalysed reaction is pyridoxamine 5'-phosphate + O2 + H2O = pyridoxal 5'-phosphate + H2O2 + NH4(+). The enzyme catalyses pyridoxine 5'-phosphate + O2 = pyridoxal 5'-phosphate + H2O2. It functions in the pathway cofactor metabolism; pyridoxal 5'-phosphate salvage; pyridoxal 5'-phosphate from pyridoxamine 5'-phosphate: step 1/1. It participates in cofactor metabolism; pyridoxal 5'-phosphate salvage; pyridoxal 5'-phosphate from pyridoxine 5'-phosphate: step 1/1. Functionally, catalyzes the oxidation of either pyridoxine 5'-phosphate (PNP) or pyridoxamine 5'-phosphate (PMP) into pyridoxal 5'-phosphate (PLP). This Saccharopolyspora erythraea (strain ATCC 11635 / DSM 40517 / JCM 4748 / NBRC 13426 / NCIMB 8594 / NRRL 2338) protein is Pyridoxine/pyridoxamine 5'-phosphate oxidase.